A 593-amino-acid chain; its full sequence is SPI-1 type 3 secretion system translocon protein SctE (593 aa).

Coiled coils occupy residues 151 to 208 and 287 to 314; these read DTAK…ATDA and EGRQAEMEKKSAEFQEETRKAEETNRIM. 2 consecutive transmembrane segments (helical) span residues 330 to 350 and 409 to 429; these read VVAAVFTGGASLALAAVGLAV and IVGAIVAAIAMVAVIVVVAVV.

The protein belongs to the SctE/SipB/YopB family. The core secretion machinery of the T3SS is composed of approximately 20 different proteins, including cytoplasmic components, a base, an export apparatus and a needle. This subunit is involved in the formation of a pore, called the translocon, in host membrane.

It localises to the secreted. The protein resides in the host membrane. In terms of biological role, component of the type III secretion system 1 (SPI-1 T3SS), also called injectisome, which is used to inject bacterial effector proteins into eukaryotic host cells. SipB/SctE1 and SipC/SctB are inserted into the host membrane where they form a pore and allow the translocation of effector proteins into the cytosol of target cells. This Salmonella dublin protein is SPI-1 type 3 secretion system translocon protein SctE.